The sequence spans 71 residues: Small ribosomal subunit protein bS21 (71 aa).

This sequence belongs to the bacterial ribosomal protein bS21 family.

The chain is Small ribosomal subunit protein bS21 from Alcanivorax borkumensis (strain ATCC 700651 / DSM 11573 / NCIMB 13689 / SK2).